We begin with the raw amino-acid sequence, 568 residues long: Proline--tRNA ligase (568 aa).

This sequence belongs to the class-II aminoacyl-tRNA synthetase family. ProS type 1 subfamily. In terms of assembly, homodimer.

It is found in the cytoplasm. It catalyses the reaction tRNA(Pro) + L-proline + ATP = L-prolyl-tRNA(Pro) + AMP + diphosphate. Its function is as follows. Catalyzes the attachment of proline to tRNA(Pro) in a two-step reaction: proline is first activated by ATP to form Pro-AMP and then transferred to the acceptor end of tRNA(Pro). As ProRS can inadvertently accommodate and process non-cognate amino acids such as alanine and cysteine, to avoid such errors it has two additional distinct editing activities against alanine. One activity is designated as 'pretransfer' editing and involves the tRNA(Pro)-independent hydrolysis of activated Ala-AMP. The other activity is designated 'posttransfer' editing and involves deacylation of mischarged Ala-tRNA(Pro). The misacylated Cys-tRNA(Pro) is not edited by ProRS. This is Proline--tRNA ligase from Halothermothrix orenii (strain H 168 / OCM 544 / DSM 9562).